Here is a 391-residue protein sequence, read N- to C-terminus: Alanine racemase, biosynthetic (391 aa).

The active-site Proton acceptor; specific for D-alanine is the Lys-52. Lys-52 carries the N6-(pyridoxal phosphate)lysine modification. Residue Arg-149 participates in substrate binding. Tyr-271 acts as the Proton acceptor; specific for L-alanine in catalysis. Residue Met-330 coordinates substrate.

The protein belongs to the alanine racemase family. Pyridoxal 5'-phosphate serves as cofactor.

The enzyme catalyses L-alanine = D-alanine. Its pathway is amino-acid biosynthesis; D-alanine biosynthesis; D-alanine from L-alanine: step 1/1. It participates in cell wall biogenesis; peptidoglycan biosynthesis. In terms of biological role, catalyzes the interconversion of L-alanine and D-alanine. Provides the D-alanine required for cell wall biosynthesis. The sequence is that of Alanine racemase, biosynthetic (alr) from Agrobacterium fabrum (strain C58 / ATCC 33970) (Agrobacterium tumefaciens (strain C58)).